Reading from the N-terminus, the 462-residue chain is Phosphoglucosamine mutase (462 aa).

The active-site Phosphoserine intermediate is Ser-112. Mg(2+)-binding residues include Ser-112, Asp-250, Asp-252, and Asp-254. Ser-112 carries the post-translational modification Phosphoserine.

The protein belongs to the phosphohexose mutase family. Mg(2+) is required as a cofactor. Post-translationally, activated by phosphorylation.

It catalyses the reaction alpha-D-glucosamine 1-phosphate = D-glucosamine 6-phosphate. In terms of biological role, catalyzes the conversion of glucosamine-6-phosphate to glucosamine-1-phosphate. The chain is Phosphoglucosamine mutase from Parasynechococcus marenigrum (strain WH8102).